The following is a 103-amino-acid chain: NADH-quinone oxidoreductase subunit K (103 aa).

3 helical membrane passes run 6-26, 30-50, and 66-86; these read IEYYLVVAAVLFLIGSIGFLL, LLVLLMSIELMLNAVNLTLVA, and FFVIAIAAAEAAVGLAIVLAF.

The protein belongs to the complex I subunit 4L family. NDH-1 is composed of 14 different subunits. Subunits NuoA, H, J, K, L, M, N constitute the membrane sector of the complex.

It localises to the cell inner membrane. The catalysed reaction is a quinone + NADH + 5 H(+)(in) = a quinol + NAD(+) + 4 H(+)(out). Functionally, NDH-1 shuttles electrons from NADH, via FMN and iron-sulfur (Fe-S) centers, to quinones in the respiratory chain. The immediate electron acceptor for the enzyme in this species is believed to be ubiquinone. Couples the redox reaction to proton translocation (for every two electrons transferred, four hydrogen ions are translocated across the cytoplasmic membrane), and thus conserves the redox energy in a proton gradient. This Sorangium cellulosum (strain So ce56) (Polyangium cellulosum (strain So ce56)) protein is NADH-quinone oxidoreductase subunit K.